A 213-amino-acid chain; its full sequence is Dimethylamine corrinoid protein 3 (213 aa).

Residues 1 to 91 form the B12-binding N-terminal domain; sequence MADIEGLLHE…DLPAGAEKKL (91 aa). In terms of domain architecture, B12-binding spans 92–213; the sequence is GVIVNGTVEG…AVAKAKELLL (122 aa). A methylcob(III)alamin-binding site is contributed by histidine 104.

The protein belongs to the methylamine corrinoid protein family.

The protein operates within one-carbon metabolism; methanogenesis from dimethylamine. Acts as a methyl group carrier between MtbB and MtbA. This chain is Dimethylamine corrinoid protein 3 (mtbC3), found in Methanosarcina acetivorans (strain ATCC 35395 / DSM 2834 / JCM 12185 / C2A).